The sequence spans 683 residues: Bifunctional lysine-specific demethylase and histidyl-hydroxylase NO66 (683 aa).

Over residues 1–26 (MHKASTSSANRANFQGNHKTQKSPNN) the composition is skewed to polar residues. Disordered stretches follow at residues 1–162 (MHKA…SPIQ) and 179–208 (AAGA…AAKS). Positions 54-65 (LTKEQKERRKMM) are enriched in basic and acidic residues. Over residues 85 to 94 (IDTSASTSNK) the composition is skewed to polar residues. Residues 95 to 108 (GKSKAARPTDRKRR) are compositionally biased toward basic residues. Over residues 116 to 125 (PADANNNNTK) the composition is skewed to low complexity. A Phosphoserine modification is found at serine 152. Threonine 158 is modified (phosphothreonine). Residue serine 159 is modified to Phosphoserine. Residues 179-189 (AAGASGASGPA) show a composition bias toward low complexity. The region spanning 341–480 (NPSTYLVGLR…NLLEKLMPIV (140 aa)) is the JmjC domain. Residues histidine 381, aspartate 383, and histidine 446 each coordinate Fe cation.

This sequence belongs to the ROX family. NO66 subfamily. It depends on Fe(2+) as a cofactor.

The protein resides in the nucleus. It carries out the reaction N(6),N(6)-dimethyl-L-lysyl(36)-[histone H3] + 2 2-oxoglutarate + 2 O2 = L-lysyl(36)-[histone H3] + 2 formaldehyde + 2 succinate + 2 CO2. Functionally, oxygenase that can act as both a histone lysine demethylase and a ribosomal histidine hydroxylase. Specifically demethylates 'Lys-4' (H3K4me) and 'Lys-36' (H3K36me) of histone H3, thereby playing a central role in histone code. The polypeptide is Bifunctional lysine-specific demethylase and histidyl-hydroxylase NO66 (Drosophila yakuba (Fruit fly)).